We begin with the raw amino-acid sequence, 813 residues long: Phosphoribosylformylglycinamidine synthase subunit PurL (813 aa).

The active site involves H56. 2 residues coordinate ATP: Y59 and K103. E105 serves as a coordination point for Mg(2+). Substrate contacts are provided by residues 106–109 (SHNH) and R128. H107 acts as the Proton acceptor in catalysis. D129 contributes to the Mg(2+) binding site. Residue Q253 coordinates substrate. Mg(2+) is bound at residue D281. Residue 325 to 327 (ESQ) coordinates substrate. Positions 511 and 548 each coordinate ATP. Residue N549 coordinates Mg(2+). S551 serves as a coordination point for substrate.

It belongs to the FGAMS family. As to quaternary structure, monomer. Part of the FGAM synthase complex composed of 1 PurL, 1 PurQ and 2 PurS subunits.

The protein resides in the cytoplasm. The enzyme catalyses N(2)-formyl-N(1)-(5-phospho-beta-D-ribosyl)glycinamide + L-glutamine + ATP + H2O = 2-formamido-N(1)-(5-O-phospho-beta-D-ribosyl)acetamidine + L-glutamate + ADP + phosphate + H(+). It functions in the pathway purine metabolism; IMP biosynthesis via de novo pathway; 5-amino-1-(5-phospho-D-ribosyl)imidazole from N(2)-formyl-N(1)-(5-phospho-D-ribosyl)glycinamide: step 1/2. Its function is as follows. Part of the phosphoribosylformylglycinamidine synthase complex involved in the purines biosynthetic pathway. Catalyzes the ATP-dependent conversion of formylglycinamide ribonucleotide (FGAR) and glutamine to yield formylglycinamidine ribonucleotide (FGAM) and glutamate. The FGAM synthase complex is composed of three subunits. PurQ produces an ammonia molecule by converting glutamine to glutamate. PurL transfers the ammonia molecule to FGAR to form FGAM in an ATP-dependent manner. PurS interacts with PurQ and PurL and is thought to assist in the transfer of the ammonia molecule from PurQ to PurL. The protein is Phosphoribosylformylglycinamidine synthase subunit PurL of Corynebacterium jeikeium (strain K411).